The sequence spans 328 residues: Formimidoylglutamase (328 aa).

Positions 133, 159, 161, 163, 253, and 255 each coordinate Mn(2+).

This sequence belongs to the arginase family. Mn(2+) is required as a cofactor.

The catalysed reaction is N-formimidoyl-L-glutamate + H2O = formamide + L-glutamate. The protein operates within amino-acid degradation; L-histidine degradation into L-glutamate; L-glutamate from N-formimidoyl-L-glutamate (hydrolase route): step 1/1. Its function is as follows. Catalyzes the conversion of N-formimidoyl-L-glutamate to L-glutamate and formamide. The chain is Formimidoylglutamase from Streptococcus pyogenes serotype M6 (strain ATCC BAA-946 / MGAS10394).